A 622-amino-acid chain; its full sequence is UvrABC system protein C (622 aa).

The GIY-YIG domain maps to 13–92 (DKPGVYLMKN…IKKYRPRYNI (80 aa)). The UVR domain occupies 204 to 239 (KDIIRKLKEDMDTLSENMEFEKAAELRDKIFALEKI).

This sequence belongs to the UvrC family. In terms of assembly, interacts with UvrB in an incision complex.

The protein localises to the cytoplasm. The UvrABC repair system catalyzes the recognition and processing of DNA lesions. UvrC both incises the 5' and 3' sides of the lesion. The N-terminal half is responsible for the 3' incision and the C-terminal half is responsible for the 5' incision. The chain is UvrABC system protein C from Clostridium kluyveri (strain ATCC 8527 / DSM 555 / NBRC 12016 / NCIMB 10680 / K1).